Here is a 382-residue protein sequence, read N- to C-terminus: Galactokinase (382 aa).

34 to 37 serves as a coordination point for substrate; sequence EHTD. 124–130 contacts ATP; sequence GAGLSSS. 2 residues coordinate Mg(2+): S130 and E162. D174 (proton acceptor) is an active-site residue. A substrate-binding site is contributed by Y223.

Belongs to the GHMP kinase family. GalK subfamily.

The protein resides in the cytoplasm. The catalysed reaction is alpha-D-galactose + ATP = alpha-D-galactose 1-phosphate + ADP + H(+). The protein operates within carbohydrate metabolism; galactose metabolism. Catalyzes the transfer of the gamma-phosphate of ATP to D-galactose to form alpha-D-galactose-1-phosphate (Gal-1-P). This Escherichia fergusonii (strain ATCC 35469 / DSM 13698 / CCUG 18766 / IAM 14443 / JCM 21226 / LMG 7866 / NBRC 102419 / NCTC 12128 / CDC 0568-73) protein is Galactokinase.